A 369-amino-acid polypeptide reads, in one-letter code: Glutamate 5-kinase (369 aa).

Position 14 (lysine 14) interacts with ATP. 3 residues coordinate substrate: serine 56, aspartate 143, and asparagine 155. ATP contacts are provided by residues 175–176 and 215–221; these read SD and TGGMASK. The 75-residue stretch at 277–351 folds into the PUA domain; it reads AGKIRLDQGA…GMKTQELPDD (75 aa).

The protein belongs to the glutamate 5-kinase family.

The protein localises to the cytoplasm. It carries out the reaction L-glutamate + ATP = L-glutamyl 5-phosphate + ADP. Its pathway is amino-acid biosynthesis; L-proline biosynthesis; L-glutamate 5-semialdehyde from L-glutamate: step 1/2. In terms of biological role, catalyzes the transfer of a phosphate group to glutamate to form L-glutamate 5-phosphate. This is Glutamate 5-kinase from Corynebacterium efficiens (strain DSM 44549 / YS-314 / AJ 12310 / JCM 11189 / NBRC 100395).